Here is a 101-residue protein sequence, read N- to C-terminus: Replication restart protein PriB (101 aa).

The SSB domain maps to Met-1–Thr-101.

Belongs to the PriB family. Homodimer. Interacts with PriA and DnaT. Component of the replication restart primosome. Primosome assembly occurs via a 'hand-off' mechanism. PriA binds to replication forks, subsequently PriB then DnaT bind; DnaT then displaces ssDNA to generate the helicase loading substrate.

Its function is as follows. Involved in the restart of stalled replication forks, which reloads the replicative helicase on sites other than the origin of replication; the PriA-PriB pathway is the major replication restart pathway. During primosome assembly it facilitates complex formation between PriA and DnaT on DNA; stabilizes PriA on DNA. Stimulates the DNA unwinding activity of PriA helicase. The sequence is that of Replication restart protein PriB from Shewanella piezotolerans (strain WP3 / JCM 13877).